The primary structure comprises 483 residues: Ribulose bisphosphate carboxylase large chain (483 aa).

The propeptide occupies 1–2; it reads MS. The substrate site is built by N123 and T173. The active-site Proton acceptor is the K175. Residue K177 participates in substrate binding. Positions 201, 203, and 204 each coordinate Mg(2+). Residue K201 is modified to N6-carboxylysine. S208 carries the phosphoserine modification. Residue H294 is the Proton acceptor of the active site. 2 residues coordinate substrate: R295 and H327. T330 carries the phosphothreonine modification. S379 provides a ligand contact to substrate.

This sequence belongs to the RuBisCO large chain family. Type I subfamily. As to quaternary structure, heterohexadecamer of 8 large chains and 8 small chains; disulfide-linked. The disulfide link is formed within the large subunit homodimers. Requires Mg(2+) as cofactor. Post-translationally, the disulfide bond which can form in the large chain dimeric partners within the hexadecamer appears to be associated with oxidative stress and protein turnover.

The protein localises to the plastid. It is found in the chloroplast. The catalysed reaction is 2 (2R)-3-phosphoglycerate + 2 H(+) = D-ribulose 1,5-bisphosphate + CO2 + H2O. The enzyme catalyses D-ribulose 1,5-bisphosphate + O2 = 2-phosphoglycolate + (2R)-3-phosphoglycerate + 2 H(+). RuBisCO catalyzes two reactions: the carboxylation of D-ribulose 1,5-bisphosphate, the primary event in carbon dioxide fixation, as well as the oxidative fragmentation of the pentose substrate in the photorespiration process. Both reactions occur simultaneously and in competition at the same active site. The protein is Ribulose bisphosphate carboxylase large chain of Aethionema cordifolium (Lebanon stonecress).